Here is a 428-residue protein sequence, read N- to C-terminus: uncharacterized protein (428 aa).

12 helical membrane-spanning segments follow: residues 14–34 (LYDW…FPLF), 55–75 (YTIA…GTIA), 84–104 (FFGF…FIPS), 107–127 (WLLL…ANVF), 149–169 (FGLG…VILL), 182–202 (ASQL…IPMI), 238–258 (LFLF…IITM), 272–292 (SLLI…IIYG), 302–322 (TMLY…YFME), 324–344 (TLDF…IQAL), 361–381 (FFGF…LLIA), and 392–412 (TAVF…AFVP).

Belongs to the major facilitator superfamily.

The protein resides in the cell membrane. This is an uncharacterized protein from Bacillus subtilis (strain 168).